Reading from the N-terminus, the 193-residue chain is Acyl carrier protein phosphodiesterase (193 aa).

It belongs to the AcpH family.

It carries out the reaction holo-[ACP] + H2O = apo-[ACP] + (R)-4'-phosphopantetheine + H(+). In terms of biological role, converts holo-ACP to apo-ACP by hydrolytic cleavage of the phosphopantetheine prosthetic group from ACP. In Salmonella agona (strain SL483), this protein is Acyl carrier protein phosphodiesterase.